The chain runs to 469 residues: Putative dipeptidase MW1694 (469 aa).

H84 contacts Zn(2+). The active site involves D86. Position 115 (D115) interacts with Zn(2+). Residue E149 is the Proton acceptor of the active site. Residues E150, D173, and H440 each contribute to the Zn(2+) site.

It belongs to the peptidase M20A family. Zn(2+) serves as cofactor.

The polypeptide is Putative dipeptidase MW1694 (Staphylococcus aureus (strain MW2)).